We begin with the raw amino-acid sequence, 333 residues long: CMP-N-acetylneuraminate-beta-galactosamide-alpha-2,3-sialyltransferase 4 (333 aa).

Topologically, residues 1–8 (MTSKSHWK) are cytoplasmic. The helical; Signal-anchor for type II membrane protein transmembrane segment at 9 to 26 (LLALALVLVVVMVWYSIS) threads the bilayer. The Lumenal segment spans residues 27–333 (REDRYIEFFY…MGAVKNLTYF (307 aa)). N-linked (GlcNAc...) asparagine glycosylation is found at N61, N131, N310, and N329. A disulfide bond links C120 and C273.

The protein belongs to the glycosyltransferase 29 family.

The protein localises to the golgi apparatus. The protein resides in the golgi stack membrane. It catalyses the reaction a beta-D-galactosyl-(1-&gt;3)-N-acetyl-beta-D-galactosaminyl derivative + CMP-N-acetyl-beta-neuraminate = an N-acetyl-alpha-neuraminyl-(2-&gt;3)-beta-D-galactosyl-(1-&gt;3)-N-acetyl-beta-D-galactosaminyl derivative + CMP + H(+). The catalysed reaction is a beta-D-galactosyl-(1-&gt;3)-N-acetyl-alpha-D-galactosaminyl derivative + CMP-N-acetyl-beta-neuraminate = an N-acetyl-alpha-neuraminyl-(2-&gt;3)-beta-D-galactosyl-(1-&gt;3)-N-acetyl-alpha-D-galactosaminyl derivative + CMP + H(+). It carries out the reaction a beta-D-galactosyl-(1-&gt;4)-N-acetyl-beta-D-glucosaminyl derivative + CMP-N-acetyl-beta-neuraminate = an N-acetyl-alpha-neuraminyl-(2-&gt;3)-beta-D-galactosyl-(1-&gt;4)-N-acetyl-beta-D-glucosaminyl derivative + CMP + H(+). The enzyme catalyses a ganglioside GM1 (d18:1(4E)) + CMP-N-acetyl-beta-neuraminate = a ganglioside GD1a (d18:1(4E)) + CMP + H(+). It catalyses the reaction a ganglioside GA1 (d18:1(4E)) + CMP-N-acetyl-beta-neuraminate = a ganglioside GM1b (d18:1(4E)) + CMP + H(+). The catalysed reaction is a ganglioside GT1c (d18:1(4E)) + CMP-N-acetyl-beta-neuraminate = a ganglioside GQ1c (d18:1(4E)) + CMP + H(+). It carries out the reaction a neolactoside nLc4Cer + CMP-N-acetyl-beta-neuraminate = a neolactoside IV(3)-alpha-NeuAc-nLc4Cer + CMP + H(+). The enzyme catalyses a neolactoside nLc4Cer(d18:1(4E)) + CMP-N-acetyl-beta-neuraminate = a neolactoside IV(3)-alpha-NeuAc-nLc4Cer(d18:1(4E)) + CMP + H(+). The protein operates within protein modification; protein glycosylation. It functions in the pathway glycolipid biosynthesis. A beta-galactoside alpha2-3 sialyltransferase involved in terminal sialylation of glycoproteins and glycolipids. Catalyzes the transfer of sialic acid (N-acetyl-neuraminic acid; Neu5Ac) from the nucleotide sugar donor CMP-Neu5Ac onto acceptor Galbeta-(1-&gt;3)-GalNAc- and Galbeta-(1-&gt;4)-GlcNAc-terminated glycoconjugates through an alpha2-3 linkage. Plays a major role in hemostasis. Responsible for sialylation of plasma VWF/von Willebrand factor, preventing its recognition by asialoglycoprotein receptors (ASGPR) and subsequent clearance. Regulates ASGPR-mediated clearance of platelets. Participates in the biosynthesis of the sialyl Lewis X epitopes, both on O- and N-glycans, which are recognized by SELE/E-selectin, SELP/P-selectin and SELL/L-selectin. Essential for selectin-mediated rolling and adhesion of leukocytes during extravasation. Contributes to adhesion and transendothelial migration of neutrophils likely through terminal sialylation of CXCR2. In glycosphingolipid biosynthesis, sialylates GM1 and GA1 gangliosides to form GD1a and GM1b, respectively. Metabolizes brain c-series ganglioside GT1c forming GQ1c. Synthesizes ganglioside LM1 (IV3Neu5Ac-nLc4Cer), a major structural component of peripheral nerve myelin. The sequence is that of CMP-N-acetylneuraminate-beta-galactosamide-alpha-2,3-sialyltransferase 4 (St3gal4) from Rattus norvegicus (Rat).